A 147-amino-acid polypeptide reads, in one-letter code: UPF0306 protein YhbP (147 aa).

The protein belongs to the UPF0306 family.

The protein is UPF0306 protein YhbP of Salmonella schwarzengrund (strain CVM19633).